We begin with the raw amino-acid sequence, 789 residues long: Protein translocase subunit SecA (789 aa).

ATP-binding positions include Gln-85, Gly-103–Thr-107, and Asp-492.

Belongs to the SecA family. As to quaternary structure, monomer and homodimer. Part of the essential Sec protein translocation apparatus which comprises SecA, SecYEG and auxiliary proteins SecDF. Other proteins may also be involved.

The protein resides in the cell membrane. Its subcellular location is the cytoplasm. It carries out the reaction ATP + H2O + cellular proteinSide 1 = ADP + phosphate + cellular proteinSide 2.. Part of the Sec protein translocase complex. Interacts with the SecYEG preprotein conducting channel. Has a central role in coupling the hydrolysis of ATP to the transfer of proteins into and across the cell membrane, serving as an ATP-driven molecular motor driving the stepwise translocation of polypeptide chains across the membrane. In Limosilactobacillus fermentum (strain NBRC 3956 / LMG 18251) (Lactobacillus fermentum), this protein is Protein translocase subunit SecA.